The chain runs to 172 residues: Shikimate kinase (172 aa).

11-16 is a binding site for ATP; that stretch reads GAGKST. Ser-15 contacts Mg(2+). Residues Asp-33, Arg-57, and Gly-79 each contribute to the substrate site. Arg-117 is a binding site for ATP. Arg-136 contributes to the substrate binding site. An ATP-binding site is contributed by Arg-153.

This sequence belongs to the shikimate kinase family. In terms of assembly, monomer. Mg(2+) is required as a cofactor.

Its subcellular location is the cytoplasm. It carries out the reaction shikimate + ATP = 3-phosphoshikimate + ADP + H(+). It functions in the pathway metabolic intermediate biosynthesis; chorismate biosynthesis; chorismate from D-erythrose 4-phosphate and phosphoenolpyruvate: step 5/7. Its function is as follows. Catalyzes the specific phosphorylation of the 3-hydroxyl group of shikimic acid using ATP as a cosubstrate. The chain is Shikimate kinase from Pseudomonas fluorescens (strain Pf0-1).